A 286-amino-acid chain; its full sequence is Deleted in azoospermia-like-B (286 aa).

Residues 33–114 (NTVFVGGIDI…PAIRKICTYV (82 aa)) enclose the RRM domain. The region spanning 155 to 180 (ACPYPSSPPMAIQQIPVGCQQPGYFQ) is the DAZ domain.

It belongs to the RRM DAZ family. Interacts with the C-terminus of pabp1 and with epabp. Prior to oocyte maturation, found in a complex with epabp and pum2 proteins and spdy1 mRNA; pum2 dissociates from the complex during maturation.

It localises to the cytoplasm. In terms of biological role, RNA-binding protein that is required for primordial germ cell (PGC) differentiation and indirectly necessary for the migration of PGCs through the endoderm. May promote meiotic cell division during spermatogenesis. Shows a preference for G- and U-rich RNAs and probably binds the 3'-UTR of target mRNAs. Stimulates the initiation of translation of mRNAs through the recruitment of poly(A)-binding proteins (PABPs). The sequence is that of Deleted in azoospermia-like-B (dazl-b) from Xenopus laevis (African clawed frog).